The following is a 191-amino-acid chain: GTP cyclohydrolase 1 (191 aa).

Zn(2+)-binding residues include Cys-80, His-83, and Cys-151.

This sequence belongs to the GTP cyclohydrolase I family. Toroid-shaped homodecamer, composed of two pentamers of five dimers.

The enzyme catalyses GTP + H2O = 7,8-dihydroneopterin 3'-triphosphate + formate + H(+). The protein operates within cofactor biosynthesis; 7,8-dihydroneopterin triphosphate biosynthesis; 7,8-dihydroneopterin triphosphate from GTP: step 1/1. The protein is GTP cyclohydrolase 1 of Leifsonia xyli subsp. xyli (strain CTCB07).